Here is an 805-residue protein sequence, read N- to C-terminus: Hypoxia-inducible factor 1-alpha (805 aa).

The tract at residues 1–26 (MEGSVVVSEKKRISSERRKEKSRDAA) is disordered. Positions 8–26 (SEKKRISSERRKEKSRDAA) are enriched in basic and acidic residues. The region spanning 17–70 (RRKEKSRDAARCRRSNESEVFYELSHELPLPHNVSSHLDKASIMRLDHQLPAVE) is the bHLH domain. 2 PAS domains span residues 85-157 (DKQL…PAKK) and 229-300 (PHPS…TKGQ). The PAC domain occupies 303–346 (TGQYRMLAKKGGYVWVETQATVIYNSKNSQPQCIVCVNYVLSEV). A 4-hydroxyproline mark is found at Pro404 and Pro560. The segment at 628–669 (KESTSAPVSPYNGNRSRTSSPVRPAKAVVDKTEKSRPGTPNL) is disordered. A compositionally biased stretch (polar residues) spans 629-648 (ESTSAPVSPYNGNRSRTSSP). Asn782 carries the (3S)-3-hydroxyasparagine modification.

As to quaternary structure, efficient DNA binding requires heterodimerization of an alpha and a beta/ARNT subunit. Post-translationally, in normoxia, is hydroxylated on Pro-404 and Pro-560. The hydroxylated prolines promote interaction with VHL, initiating rapid ubiquitination and subsequent proteasomal degradation. Under hypoxia, proline hydroxylation is impaired and ubiquitination is attenuated, resulting in stabilization. In terms of processing, in normoxia, is hydroxylated on Asn-782, thus abrogating interaction with CREBBP and EP300 and preventing transcriptional activation. The iron and 2-oxoglutarate dependent 3-hydroxylation of asparagine is (S) stereospecific within HIF CTAD domains.

The protein resides in the cytoplasm. It localises to the nucleus. Its subcellular location is the nucleus speckle. Induced by reactive oxygen species (ROS). Functionally, functions as a master transcriptional regulator of the adaptive response to hypoxia. Under hypoxic conditions, activates the transcription of over 40 genes, including erythropoietin, glucose transporters, glycolytic enzymes, vascular endothelial growth factor, HILPDA, and other genes whose protein products increase oxygen delivery or facilitate metabolic adaptation to hypoxia. Plays an essential role in embryonic vascularization, tumor angiogenesis and pathophysiology of ischemic disease. The sequence is that of Hypoxia-inducible factor 1-alpha (hif1a) from Xenopus laevis (African clawed frog).